The sequence spans 623 residues: MAPKVTSELLRQLRQAMRNSEYVAEPIQAYIIPSGDAHQSEYIAPCDCRRAFVSGFDGSAGTAIITEEHAAMWTDGRYFLQAAKQMDNNWTLMKMGLKDTPTQEDWLVSVLPEGSRVGVDPLIIPTDYWKKMAKVLRSAGHHLVPVKENLVDKIWTDRPERPCKPLLTLGLDYTGISWKEKVADLRLKMAERSIAWFVVTALDEIAWLFNLRGSDVEHNPVFFSYAIVGLETIMLFIDGDRVDAPGVKQHLLLDLGLEAEYRIQVLPYKSILSELKALCADLSPREKVWVSDKASYAVSEAIPKDHRCCMPYTPICIAKAVKNSAESDGMRRAHIKDAVALCELFNWLEQEVPKGGVTEISAADKAEEFRRQQADFVDLSFPTISSTGPNGAIIHYAPVPETNRTLSLDEVYLIDSGAQYKDGTTDVTRTMHFGTPTAYEKECFTYVLKGHIAVSAAVFPTGTKGHLLDSFARSALWDSGLDYLHGTGHGVGSFLNVHEGPCGISYKTFSDEPLEAGMIVTDEPGYYEDGAFGIRIENVVLVVPAKTKYNFNNRGSLTFEPLTLVPIQTKMIDVNALTDKECDWLNSYHQTCRDVVGKELQSQGRQEALEWLIRETEPVSRQH.

Residue Arg-77 coordinates a peptide. An N6-acetyllysine modification is found at Lys-304. Residue His-395 coordinates a peptide. Residues Asp-415, Asp-426, and His-489 each coordinate Mn(2+). A peptide contacts are provided by His-489, His-498, and Glu-523. Positions 523 and 537 each coordinate Mn(2+).

This sequence belongs to the peptidase M24B family. As to quaternary structure, homodimer. It depends on Mn(2+) as a cofactor.

The protein resides in the cytoplasm. It is found in the cytosol. The enzyme catalyses Release of any N-terminal amino acid, including proline, that is linked to proline, even from a dipeptide or tripeptide.. Metalloaminopeptidase that catalyzes the removal of a penultimate prolyl residue from the N-termini of peptides, such as Arg-Pro-Pro. Contributes to the degradation of bradykinin. The polypeptide is Xaa-Pro aminopeptidase 1 (Mus musculus (Mouse)).